The chain runs to 919 residues: MDVENRECSADLAEELRKLSASRSLSEEVGVDPALVSEGAPEGVIEGPAVVSSPAKMYTALKAVDDEMPPLKSENKAVVETEKVESKPRGFSAIDFAEEDGDSDADAEDEDDEDDEDDDEDDDDEDDKDMVTAKALAELANASGKKSSMGAAGPSLPSLPQRPAVRKTAAATALDTAGRITQRPNGAPSTQLTATTEENANSDTAEGNETREKLQNIRVKFLRLAHRLGQSPQNVVVAQVLYRLGLAESLRGGNTSNRAGAFSFDRANALAEEQEAANQEEELDFACTILVLGKTGVGKSATINSIFDDRKSVTSAFKPSTNKVQEIVGTVHGIKVRVIDTPGLLPSVADQQHNERIMGQVKKHIKKASPDIVLYFDRLDMQSRDFGDLPLLKTITDLFGAAVWFNAIVVLTHASSAPPDGPNGVPLSYEMFVAQRSHVVQQTIRQAAGDMRLMNPVSLVENHPACRTNRNGQRVLPNGQIWKPQLLLLCFASKILAEANSLLKLQETATPGRPFGQRSRVPPLPFLLSSLLQSRAQLKLPDEQLDESDESDDDEEEEDSEADDYDELPPFRPLSKEELEELTKEQRQDYMDELADRERLFQKKQYREEMRRRKEMKKRQAQMSKEELAQPDEADDEAGQPAAVPVPMPDMALPPSFDSDNPTHRYRYLETANQWLVRPVLETHGWDHDAGYDGFNVEKMFVVKNKIPASISGQVTKDKKESQVNFEAAASLKHGEGKVTLTGFDVQTIGKDLAYTLRAETRFNNFKRNKTTAGVTATYLNDTIAAGVKLEDRILIGKRVKMVVNGGVLTGKGDKAFGGSLEATLRGKEYPLSRTLSTLGLSVMDWHGDLAIGGNLQSQFMVGKTMMVGRANLNNRGSGQVSIRASSSEQLQMVLIGIVPILRSLINCRFGFGGGQSSQ.

Disordered stretches follow at residues 20-47 (SASR…VIEG) and 64-211 (VDDE…NETR). The segment covering 73-88 (SENKAVVETEKVESKP) has biased composition (basic and acidic residues). Acidic residues predominate over residues 96 to 128 (FAEEDGDSDADAEDEDDEDDEDDDEDDDDEDDK). Positions 182–207 (QRPNGAPSTQLTATTEENANSDTAEG) are enriched in polar residues. The AIG1-type G domain maps to 284-513 (DFACTILVLG…KLQETATPGR (230 aa)). Residues 293–300 (GKTGVGKS) are G1. Residue 296-301 (GVGKSA) participates in GTP binding. S300 provides a ligand contact to Mg(2+). The G2 stretch occupies residues 319 to 323 (PSTNK). A G3 region spans residues 340–343 (DTPG). Positions 412 to 415 (THAS) are G4. Residues H413 and 461-462 (EN) each bind GTP. The interval 461–463 (ENH) is G5. Disordered stretches follow at residues 540 to 585 (LPDE…LTKE) and 611 to 650 (RRRK…PMPD). Residues 543 to 567 (EQLDESDESDDDEEEEDSEADDYDE) show a composition bias toward acidic residues. The span at 574 to 585 (LSKEELEELTKE) shows a compositional bias: basic and acidic residues. Positions 629 to 638 (AQPDEADDEA) are enriched in acidic residues. The segment covering 641 to 650 (PAAVPVPMPD) has biased composition (low complexity). The chain crosses the membrane as a helical span at residues 893–914 (MVLIGIVPILRSLINCRFGFGG).

This sequence belongs to the TRAFAC class TrmE-Era-EngA-EngB-Septin-like GTPase superfamily. AIG1/Toc34/Toc159-like paraseptin GTPase family. TOC159 subfamily. Part of the TOC core complex. Mg(2+) is required as a cofactor.

The protein resides in the plastid. It localises to the chloroplast outer membrane. GTPase involved in protein precursor import into chloroplasts. Seems to recognize chloroplast-destined precursor proteins and regulate their presentation to the translocation channel through GTP hydrolysis. Probably specialized in the import of nuclear encoded non-photosynthetic preproteins from the cytoplasm to the chloroplast. In Physcomitrium patens (Spreading-leaved earth moss), this protein is Translocase of chloroplast 101, chloroplastic.